A 37-amino-acid polypeptide reads, in one-letter code: Cytochrome b6-f complex subunit 5 (37 aa).

A helical transmembrane segment spans residues 5-25; the sequence is LLSGIVLGLISITSAGLFVTA.

It belongs to the PetG family. The 4 large subunits of the cytochrome b6-f complex are cytochrome b6, subunit IV (17 kDa polypeptide, PetD), cytochrome f and the Rieske protein, while the 4 small subunits are PetG, PetL, PetM and PetN. The complex functions as a dimer.

It localises to the plastid. Its subcellular location is the chloroplast thylakoid membrane. Functionally, component of the cytochrome b6-f complex, which mediates electron transfer between photosystem II (PSII) and photosystem I (PSI), cyclic electron flow around PSI, and state transitions. PetG is required for either the stability or assembly of the cytochrome b6-f complex. This chain is Cytochrome b6-f complex subunit 5, found in Psilotum nudum (Whisk fern).